Reading from the N-terminus, the 404-residue chain is Type II restriction enzyme EcoRII (404 aa).

Residue Y308 is part of the active site.

As to quaternary structure, homodimer. Mg(2+) is required as a cofactor.

It carries out the reaction Endonucleolytic cleavage of DNA to give specific double-stranded fragments with terminal 5'-phosphates.. Its function is as follows. An E and P subtype restriction enzyme that recognizes the double-stranded sequence 5'-CCWGG-3' and cleaves before C-1. This is Type II restriction enzyme EcoRII (ecoRIIR) from Escherichia coli.